We begin with the raw amino-acid sequence, 203 residues long: Outer-membrane lipoprotein carrier protein (203 aa).

The N-terminal stretch at 1 to 21 (MKKMAIACALLSSVVASSVWA) is a signal peptide. The segment at 178 to 203 (QQNGAVDPSKFTFTPPQGVTIDDQRK) is disordered.

It belongs to the LolA family. In terms of assembly, monomer.

It is found in the periplasm. Functionally, participates in the translocation of lipoproteins from the inner membrane to the outer membrane. Only forms a complex with a lipoprotein if the residue after the N-terminal Cys is not an aspartate (The Asp acts as a targeting signal to indicate that the lipoprotein should stay in the inner membrane). The polypeptide is Outer-membrane lipoprotein carrier protein (Salmonella agona (strain SL483)).